Here is a 665-residue protein sequence, read N- to C-terminus: Transketolase (665 aa).

Residue His26 coordinates substrate. Residues His66 and 114-116 (GPL) each bind thiamine diphosphate. A Mg(2+)-binding site is contributed by Asp155. Positions 156 and 185 each coordinate thiamine diphosphate. Mg(2+) is bound by residues Asn185 and Ile187. Residues His261, Arg358, and Ser385 each contribute to the substrate site. His261 is a thiamine diphosphate binding site. Glu411 acts as the Proton donor in catalysis. Residue Phe437 participates in thiamine diphosphate binding. Positions 461, 469, and 520 each coordinate substrate.

Belongs to the transketolase family. Homodimer. Mg(2+) serves as cofactor. The cofactor is Ca(2+). Mn(2+) is required as a cofactor. Requires Co(2+) as cofactor. It depends on thiamine diphosphate as a cofactor.

It catalyses the reaction D-sedoheptulose 7-phosphate + D-glyceraldehyde 3-phosphate = aldehydo-D-ribose 5-phosphate + D-xylulose 5-phosphate. In terms of biological role, catalyzes the transfer of a two-carbon ketol group from a ketose donor to an aldose acceptor, via a covalent intermediate with the cofactor thiamine pyrophosphate. The sequence is that of Transketolase (tkt) from Buchnera aphidicola subsp. Schizaphis graminum (strain Sg).